Reading from the N-terminus, the 357-residue chain is DNA replication and repair protein RecF (357 aa).

An ATP-binding site is contributed by 30 to 37 (GANGSGKT).

It belongs to the RecF family.

It is found in the cytoplasm. Its function is as follows. The RecF protein is involved in DNA metabolism; it is required for DNA replication and normal SOS inducibility. RecF binds preferentially to single-stranded, linear DNA. It also seems to bind ATP. The polypeptide is DNA replication and repair protein RecF (Salmonella agona (strain SL483)).